Here is a 431-residue protein sequence, read N- to C-terminus: Fumarylacetoacetase fahA (431 aa).

A Ca(2+)-binding site is contributed by aspartate 133. A substrate-binding site is contributed by tyrosine 135. Histidine 140 (proton acceptor) is an active-site residue. Residue arginine 149 coordinates substrate. The Ca(2+) site is built by glutamate 209, glutamate 211, and aspartate 243. Aspartate 243 contributes to the Mg(2+) binding site. The substrate site is built by glutamine 250 and tyrosine 254. Residues lysine 263 and threonine 267 each contribute to the Mg(2+) site. Threonine 362 lines the substrate pocket. Polar residues predominate over residues 362-381; sequence TISGKENQTQGSLLEQTNGK. The tract at residues 362–382 is disordered; sequence TISGKENQTQGSLLEQTNGKN.

It belongs to the FAH family. Ca(2+) serves as cofactor. Mg(2+) is required as a cofactor.

The enzyme catalyses 4-fumarylacetoacetate + H2O = acetoacetate + fumarate + H(+). The protein operates within amino-acid degradation; L-phenylalanine degradation; acetoacetate and fumarate from L-phenylalanine: step 6/6. Functionally, fumarylacetoacetase; part of the L-tyrosine degradation gene cluster that mediates the biosynthesis of the brownish pigment pyomelanin as an alternative melanin. The 4-hydroxyphenylpyruvate dioxygenase hppD catalyzes the conversion of 4-hydroxyphenylpyruvate to homogentisic acid (HGA). The protein hmgX is crucial for this conversion and thus, probably functions as an accessory factor to mediate specific activity of hppD. The homogentisate 1,2-dioxygenase hmgA is then involved in the cleavage of the aromatic ring of HGA and its conversion to 4-maleylacetoacetate. When hmgA activity is lowered by the cell wall integrity (CWI) signaling pathway, HGA accumulates and leads to the production of pyomelanin through benzoquinone acetic acid after oxidation and polymerization. On the opposite, in non-stress conditions, both hppD and hmgA activities are balanced and HGA is degraded into 4-maleylacetoacetate. 4-maleylacetoacetate is further converted to 4-fumarylacetoacetate by the maleylacetoacetate isomerase maiA, which is degraded into fumarate and acetoacetate by the fumarylacetoacetase fahA. This Aspergillus fumigatus (strain ATCC MYA-4609 / CBS 101355 / FGSC A1100 / Af293) (Neosartorya fumigata) protein is Fumarylacetoacetase fahA.